We begin with the raw amino-acid sequence, 604 residues long: Elongation factor 4 (604 aa).

Residues 7–190 (SRLRNFCIIA…IVDRVPAPPD (184 aa)) enclose the tr-type G domain. Residues 19–24 (DHGKST) and 136–139 (NKID) contribute to the GTP site.

Belongs to the TRAFAC class translation factor GTPase superfamily. Classic translation factor GTPase family. LepA subfamily.

The protein localises to the cell inner membrane. The catalysed reaction is GTP + H2O = GDP + phosphate + H(+). Its function is as follows. Required for accurate and efficient protein synthesis under certain stress conditions. May act as a fidelity factor of the translation reaction, by catalyzing a one-codon backward translocation of tRNAs on improperly translocated ribosomes. Back-translocation proceeds from a post-translocation (POST) complex to a pre-translocation (PRE) complex, thus giving elongation factor G a second chance to translocate the tRNAs correctly. Binds to ribosomes in a GTP-dependent manner. The sequence is that of Elongation factor 4 from Synechococcus sp. (strain RCC307).